A 464-amino-acid polypeptide reads, in one-letter code: 3-isopropylmalate dehydratase large subunit (464 aa).

Cysteine 345, cysteine 405, and cysteine 408 together coordinate [4Fe-4S] cluster.

The protein belongs to the aconitase/IPM isomerase family. LeuC type 1 subfamily. As to quaternary structure, heterodimer of LeuC and LeuD. It depends on [4Fe-4S] cluster as a cofactor.

The catalysed reaction is (2R,3S)-3-isopropylmalate = (2S)-2-isopropylmalate. It participates in amino-acid biosynthesis; L-leucine biosynthesis; L-leucine from 3-methyl-2-oxobutanoate: step 2/4. Its function is as follows. Catalyzes the isomerization between 2-isopropylmalate and 3-isopropylmalate, via the formation of 2-isopropylmaleate. This chain is 3-isopropylmalate dehydratase large subunit, found in Bacteroides thetaiotaomicron (strain ATCC 29148 / DSM 2079 / JCM 5827 / CCUG 10774 / NCTC 10582 / VPI-5482 / E50).